Here is a 356-residue protein sequence, read N- to C-terminus: Putative methylthioribose-1-phosphate isomerase (356 aa).

Residues 57–59 (RGA), Arg100, and Gln206 contribute to the substrate site. Asp247 serves as the catalytic Proton donor. Residue 257–258 (NK) participates in substrate binding.

It belongs to the eIF-2B alpha/beta/delta subunits family. MtnA subfamily.

The catalysed reaction is 5-(methylsulfanyl)-alpha-D-ribose 1-phosphate = 5-(methylsulfanyl)-D-ribulose 1-phosphate. Functionally, catalyzes the interconversion of methylthioribose-1-phosphate (MTR-1-P) into methylthioribulose-1-phosphate (MTRu-1-P). The polypeptide is Putative methylthioribose-1-phosphate isomerase (aIF-2BI) (Pyrococcus abyssi (strain GE5 / Orsay)).